A 405-amino-acid polypeptide reads, in one-letter code: Homocitrate synthase AksA (405 aa).

Residues 23-274 (IEICDVTLRD…IERYDTTKLN (252 aa)) enclose the Pyruvate carboxyltransferase domain.

This sequence belongs to the alpha-IPM synthase/homocitrate synthase family.

It catalyses the reaction acetyl-CoA + 2-oxoglutarate + H2O = (2R)-homocitrate + CoA + H(+). The catalysed reaction is 2-oxoadipate + acetyl-CoA + H2O = (R)-dihomocitrate + CoA + H(+). The enzyme catalyses 2-oxoheptanedioate + acetyl-CoA + H2O = (R)-trihomocitrate + CoA + H(+). The protein operates within organic acid metabolism; 2-oxosuberate biosynthesis. Functionally, catalyzes the condensation of alpha-ketoglutarate and acetyl-CoA to form (R)-homocitrate. Can also catalyze the condensation of alpha-ketoadipate with acetyl-CoA to form (R)-homo(2)citrate, and the condensation of alpha-ketopimelate with acetyl-CoA to form (R)-homo(3)citrate. These reactions are part of the biosynthesis pathway of coenzyme B and biotin. This chain is Homocitrate synthase AksA (aksA), found in Methanosarcina mazei (strain ATCC BAA-159 / DSM 3647 / Goe1 / Go1 / JCM 11833 / OCM 88) (Methanosarcina frisia).